Here is a 57-residue protein sequence, read N- to C-terminus: Small ribosomal subunit protein bS21 (57 aa).

The protein belongs to the bacterial ribosomal protein bS21 family.

This chain is Small ribosomal subunit protein bS21, found in Lysinibacillus sphaericus (strain C3-41).